The primary structure comprises 234 residues: Sugar fermentation stimulation protein A (234 aa).

The segment at residues 201–220 (LLSEAQNKGVEVLAYKAELS) is a DNA-binding region (H-T-H motif).

It belongs to the SfsA family.

In terms of biological role, binds to DNA non-specifically. Could be a regulatory factor involved in maltose metabolism. This is Sugar fermentation stimulation protein A from Salmonella typhi.